The chain runs to 236 residues: MIVFILLSLAAVLEQSFGNVDFNSESPRRPEKQKEIVDRHNSFRRSVRPTASNMLKMEWYSEAASNAERWAYRCNLGHSPDSSRILDGIKCGENIYMSSNPRAWTEILQLWYDEYKNFVYGVGANPPGSVTGHFSQMVWYKSYRIGCAAAYCPSSGYSYFYVCQYCPIGNIEGSTATPYKSGPTCGDCPSACDNGLCTNPCLREDKFTNCKSLVQQNSCQHDWTRKNCPATCFCHN.

Residues methionine 1–glycine 18 form the signal peptide. In terms of domain architecture, SCP spans valine 37–tyrosine 165. 8 disulfide bridges follow: cysteine 74–cysteine 152, cysteine 91–cysteine 166, cysteine 147–cysteine 163, cysteine 185–cysteine 192, cysteine 188–cysteine 197, cysteine 201–cysteine 234, cysteine 210–cysteine 228, and cysteine 219–cysteine 232. Positions cysteine 201–cysteine 234 constitute a ShKT domain.

The protein belongs to the CRISP family. In terms of tissue distribution, expressed by the venom gland.

The protein resides in the secreted. Its function is as follows. Blocks contraction of smooth muscle elicited by high potassium-induced depolarization, but does not block caffeine-stimulated contraction. May target voltage-gated calcium channels on smooth muscle. This Trimorphodon biscutatus (Western lyre snake) protein is Cysteine-rich venom protein TRI1.